The sequence spans 369 residues: tRNA-specific 2-thiouridylase MnmA (369 aa).

Residues 12–19 (GMSGGVDS) and M38 contribute to the ATP site. The interval 98–100 (NPD) is interaction with target base in tRNA. Residue C103 is the Nucleophile of the active site. A disulfide bond links C103 and C200. Residue G128 participates in ATP binding. The segment at 150 to 152 (KDQ) is interaction with tRNA. The active-site Cysteine persulfide intermediate is C200. Positions 312-313 (RY) are interaction with tRNA.

Belongs to the MnmA/TRMU family. In terms of assembly, interacts with TusE.

It is found in the cytoplasm. It carries out the reaction S-sulfanyl-L-cysteinyl-[protein] + uridine(34) in tRNA + AH2 + ATP = 2-thiouridine(34) in tRNA + L-cysteinyl-[protein] + A + AMP + diphosphate + H(+). Its function is as follows. Catalyzes the 2-thiolation of uridine at the wobble position (U34) of tRNA(Lys), tRNA(Glu) and tRNA(Gln), leading to the formation of s(2)U34, the first step of tRNA-mnm(5)s(2)U34 synthesis. Sulfur is provided by IscS, via a sulfur-relay system. Binds ATP and its substrate tRNAs. In Sodalis glossinidius (strain morsitans), this protein is tRNA-specific 2-thiouridylase MnmA.